A 187-amino-acid chain; its full sequence is 1,6-anhydro-N-acetylmuramyl-L-alanine amidase AmpD (187 aa).

The 139-residue stretch at T29–P167 folds into the N-acetylmuramoyl-L-alanine amidase domain. H34 serves as a coordination point for Zn(2+). The Proton acceptor role is filled by E116. Residues H154 and D164 each coordinate Zn(2+).

It belongs to the N-acetylmuramoyl-L-alanine amidase 2 family. It depends on Zn(2+) as a cofactor.

The protein resides in the cytoplasm. It catalyses the reaction Hydrolyzes the link between N-acetylmuramoyl residues and L-amino acid residues in certain cell-wall glycopeptides.. In terms of biological role, involved in cell wall peptidoglycan recycling. Specifically cleaves the amide bond between the lactyl group of N-acetylmuramic acid and the alpha-amino group of the L-alanine in degradation products containing an anhydro N-acetylmuramyl moiety. The sequence is that of 1,6-anhydro-N-acetylmuramyl-L-alanine amidase AmpD from Enterobacter cloacae.